A 131-amino-acid polypeptide reads, in one-letter code: Arsenate reductase 1 (131 aa).

Active-site nucleophile residues include Cys10, Cys82, and Cys89. Disulfide bonds link Cys10-Cys82 and Cys82-Cys89.

Belongs to the low molecular weight phosphotyrosine protein phosphatase family. Thioredoxin-coupled ArsC subfamily.

Its subcellular location is the cytoplasm. The enzyme catalyses arsenate + [thioredoxin]-dithiol + H(+) = arsenite + [thioredoxin]-disulfide + H2O. Functionally, catalyzes the reduction of arsenate [As(V)] to arsenite [As(III)]. The polypeptide is Arsenate reductase 1 (Staphylococcus saprophyticus subsp. saprophyticus (strain ATCC 15305 / DSM 20229 / NCIMB 8711 / NCTC 7292 / S-41)).